We begin with the raw amino-acid sequence, 155 residues long: Small ribosomal subunit protein uS7cz/uS7cy (155 aa).

The protein belongs to the universal ribosomal protein uS7 family. As to quaternary structure, part of the 30S ribosomal subunit.

It localises to the plastid. Its subcellular location is the chloroplast. In terms of biological role, one of the primary rRNA binding proteins, it binds directly to 16S rRNA where it nucleates assembly of the head domain of the 30S subunit. In Drimys granadensis, this protein is Small ribosomal subunit protein uS7cz/uS7cy (rps7-A).